The following is a 217-amino-acid chain: ATP-dependent Clp protease proteolytic subunit (217 aa).

Residue serine 119 is the Nucleophile of the active site. Histidine 144 is an active-site residue.

This sequence belongs to the peptidase S14 family. As to quaternary structure, fourteen ClpP subunits assemble into 2 heptameric rings which stack back to back to give a disk-like structure with a central cavity, resembling the structure of eukaryotic proteasomes.

The protein localises to the cytoplasm. It catalyses the reaction Hydrolysis of proteins to small peptides in the presence of ATP and magnesium. alpha-casein is the usual test substrate. In the absence of ATP, only oligopeptides shorter than five residues are hydrolyzed (such as succinyl-Leu-Tyr-|-NHMec, and Leu-Tyr-Leu-|-Tyr-Trp, in which cleavage of the -Tyr-|-Leu- and -Tyr-|-Trp bonds also occurs).. Its function is as follows. Cleaves peptides in various proteins in a process that requires ATP hydrolysis. Has a chymotrypsin-like activity. Plays a major role in the degradation of misfolded proteins. This is ATP-dependent Clp protease proteolytic subunit from Bordetella bronchiseptica (strain ATCC BAA-588 / NCTC 13252 / RB50) (Alcaligenes bronchisepticus).